The primary structure comprises 1762 residues: Non-reducing polyketide synthase PKS8-1 (1762 aa).

Residues 17–247 (DIYRGLHNHS…ARYIELPVYG (231 aa)) form an N-terminal acylcarrier protein transacylase domain (SAT) region. Positions 385 to 819 (QSKLAITGIS…GGNTTMVLEE (435 aa)) constitute a Ketosynthase family 3 (KS3) domain. Catalysis depends on for beta-ketoacyl synthase activity residues C558, H694, and H737. Positions 920-1240 (FSFTGQGASH…MAALHLTGVA (321 aa)) are malonyl-CoA:ACP transacylase (MAT) domain. The tract at residues 1308-1622 (TSTVQQVIAL…PRILLNRFFS (315 aa)) is product template (PT) domain. The interval 1312-1448 (QQVIALEVEG…GDANDWLSSW (137 aa)) is N-terminal hotdog fold. In terms of domain architecture, PKS/mFAS DH spans 1312–1618 (QQVIALEVEG…FRSYPRILLN (307 aa)). H1344 (proton acceptor; for dehydratase activity) is an active-site residue. Residues 1471-1618 (ASRFTRNMAY…FRSYPRILLN (148 aa)) form a C-terminal hotdog fold region. The active-site Proton donor; for dehydratase activity is the D1529. The segment at 1632-1689 (RAGNAATVTPQVTIPKPPSSLKTPAPANPSRRDSGVESKPLPPPQPKQAPPSTDSENS) is disordered. Pro residues predominate over residues 1671-1680 (PLPPPQPKQA). The 78-residue stretch at 1685 to 1762 (DSENSTISKA…DMRRWLEEHY (78 aa)) folds into the Carrier domain. S1722 bears the O-(pantetheine 4'-phosphoryl)serine mark.

It catalyses the reaction holo-[ACP] + 8 malonyl-CoA + 8 H(+) = atrochrysone carboxyl-[ACP] + 8 CO2 + 8 CoA + 2 H2O. Its pathway is secondary metabolite biosynthesis. Functionally, non-reducing polyketide synthase; part of the gene cluster that mediates the biosynthesis of an emodin derivative that may be involved in black Sigatoka disease of banana. The pathway begins with the synthesis of atrochrysone thioester by the polyketide synthase PKS8-1. The atrochrysone carboxyl ACP thioesterase MYCFIDRAFT_190111 then breaks the thioester bond and releases the atrochrysone carboxylic acid from PKS8-1. The decarboxylase MYCFIDRAFT_34057 then catalyzes the concerted decarboxylation-elimination required to convert atochrysone carboxylic acid into emodin anthrone, which is further oxidized to emodin by the anthrone oxygenase MYCFIDRAFT_34418. The functions of the other tailoring enzymes as well as the final product of the cluster have still to be identified. The polypeptide is Non-reducing polyketide synthase PKS8-1 (PKS8-1) (Pseudocercospora fijiensis (strain CIRAD86) (Black leaf streak disease fungus)).